The chain runs to 129 residues: Lysozyme C (129 aa).

A C-type lysozyme domain is found at 1-129 (KVFGRCELAA…VHAWIRGCRL (129 aa)). Cystine bridges form between cysteine 6/cysteine 127, cysteine 30/cysteine 115, cysteine 64/cysteine 80, and cysteine 76/cysteine 94. Active-site residues include glutamate 35 and aspartate 52.

The protein belongs to the glycosyl hydrolase 22 family. Monomer.

It localises to the secreted. It catalyses the reaction Hydrolysis of (1-&gt;4)-beta-linkages between N-acetylmuramic acid and N-acetyl-D-glucosamine residues in a peptidoglycan and between N-acetyl-D-glucosamine residues in chitodextrins.. Functionally, lysozymes have primarily a bacteriolytic function; those in tissues and body fluids are associated with the monocyte-macrophage system and enhance the activity of immunoagents. In Callipepla californica (California quail), this protein is Lysozyme C (LYZ).